The primary structure comprises 517 residues: Ribonuclease Y (517 aa).

The chain crosses the membrane as a helical span at residues 1 to 21; it reads MIESLIALIAAIVGLGIGYLV. One can recognise a KH domain in the interval 207 to 273; that stretch reads LINVINIKND…TKVIELLVED (67 aa). Residues 333–426 form the HD domain; sequence ALAHSLEVAH…VCAADTLSAA (94 aa).

Belongs to the RNase Y family.

It localises to the cell membrane. Functionally, endoribonuclease that initiates mRNA decay. In Campylobacter jejuni subsp. jejuni serotype O:6 (strain 81116 / NCTC 11828), this protein is Ribonuclease Y.